A 127-amino-acid polypeptide reads, in one-letter code: Small ribosomal subunit protein bS6 (127 aa).

This sequence belongs to the bacterial ribosomal protein bS6 family.

Its function is as follows. Binds together with bS18 to 16S ribosomal RNA. The protein is Small ribosomal subunit protein bS6 of Sulfurovum sp. (strain NBC37-1).